The primary structure comprises 66 residues: KEGYLVSKSTGCKYECLKLGDNDYCLRECKQQYGKSSGGYCYAFACWCTHLYEQAVVWPLPNKTCN.

The 66-residue stretch at 1–66 folds into the LCN-type CS-alpha/beta domain; sequence KEGYLVSKST…VWPLPNKTCN (66 aa). 4 cysteine pairs are disulfide-bonded: Cys-12–Cys-65, Cys-16–Cys-41, Cys-25–Cys-46, and Cys-29–Cys-48. The residue at position 66 (Asn-66) is an Asparagine amide.

This sequence belongs to the long (4 C-C) scorpion toxin superfamily. Sodium channel inhibitor family. Beta subfamily. C-terminal amidation increases its affinity for sodium channels. As to expression, expressed by the venom gland.

Its subcellular location is the secreted. Functionally, beta toxin that binds site-4 of sodium channels (Nav) and reduces peak current (observed on Nav1.6/SCN8A (IC(50)=307 nM)), shifts the voltage of activation toward more negative potentials (observed on Nav1.6, Nav1.1 (weak), Nav1.2 (weak), and Nav1.7 (weak)), and induces resurgent currents at negative voltages following brief and strong depolarizations (observed on Nav1.6, Nav1.1 (weak), and Nav1.7 (weak)). A reduction of peak current of Nav1.5/SCN7A has been observed in another study (IC(50)=35-40 nM). This toxin is only active on mammals. It has been shown to bind phospholipids. The sequence is that of Beta-mammal toxin Css2 from Centruroides suffusus (Durango bark scorpion).